The following is a 1481-amino-acid chain: Structural protein ORF147 (1481 aa).

Disordered stretches follow at residues 65–88 (AEKR…ENLE) and 1319–1403 (DEKL…PPIP). 3 stretches are compositionally biased toward low complexity: residues 73–84 (KGSQKKSNSSSS), 1323–1336 (SSTV…SPKT), and 1393–1403 (SSRTTITPPIP).

Its subcellular location is the virion. This Noctuidae (owlet moths) protein is Structural protein ORF147.